The following is a 231-amino-acid chain: Uracil-DNA glycosylase (231 aa).

Catalysis depends on Asp-74, which acts as the Proton acceptor.

This sequence belongs to the uracil-DNA glycosylase (UDG) superfamily. UNG family.

It localises to the cytoplasm. The enzyme catalyses Hydrolyzes single-stranded DNA or mismatched double-stranded DNA and polynucleotides, releasing free uracil.. Its function is as follows. Excises uracil residues from the DNA which can arise as a result of misincorporation of dUMP residues by DNA polymerase or due to deamination of cytosine. The polypeptide is Uracil-DNA glycosylase (Campylobacter jejuni subsp. doylei (strain ATCC BAA-1458 / RM4099 / 269.97)).